A 475-amino-acid chain; its full sequence is TOM1-like protein 1 (475 aa).

A VHS domain is found at 22–154; the sequence is ATFAGVQTED…DLLKKGVQFP (133 aa). Positions 155-175 are disordered; it reads PLDGEPETKQEAGQISPSRPT. Residues 165-175 show a composition bias toward polar residues; that stretch reads EAGQISPSRPT. Ser170 is modified (phosphoserine). The 89-residue stretch at 199-287 folds into the GAT domain; sequence EQIGKLHSEL…AILGYERFTR (89 aa). Residues 296–317 are disordered; that stretch reads KRNPTEANQTSSEPSAPSCDLL. Residues 300–310 show a composition bias toward polar residues; sequence TEANQTSSEPS. Phosphoserine is present on Ser313. Residues 392–395 form an interaction with GRB2 region; it reads YDNF. Positions 421-425 match the SH3-binding motif; that stretch reads LPPLP. Positions 442 to 445 are interaction with PIK3R1; sequence YEVM. Tyr458 is modified (phosphotyrosine). Positions 458 to 461 match the SH2-binding motif; it reads YEEI.

The protein belongs to the TOM1 family. In terms of assembly, interacts with the SH2 and SH3 domains of FYN when phosphorylated. Also interacts with GRB2 and PIK3R1 when phosphorylated. Interacts with LYN. Phosphorylated on tyrosines by FYN and LYN.

The protein resides in the golgi apparatus. The protein localises to the golgi stack. It is found in the endosome membrane. It localises to the cytoplasm. Its subcellular location is the membrane. Functionally, probable adapter protein involved in signaling pathways. Interacts with the SH2 and SH3 domains of various signaling proteins when it is phosphorylated. May promote FYN activation, possibly by disrupting intramolecular SH3-dependent interactions. This chain is TOM1-like protein 1 (Tom1l1), found in Rattus norvegicus (Rat).